The chain runs to 245 residues: Venom nerve growth factor 1 (245 aa).

A signal peptide spans 1-18 (MSMLCYTLIIAFLIGIWA). Residues 19–125 (APKSEDNVPL…ALNRNIRAKR (107 aa)) constitute a propeptide that is removed on maturation. The segment covering 47 to 66 (GLKTSRNTDQRHPAPKKAED) has biased composition (basic and acidic residues). The interval 47 to 69 (GLKTSRNTDQRHPAPKKAEDQEL) is disordered. Intrachain disulfides connect Cys139–Cys206, Cys182–Cys234, and Cys194–Cys236. N-linked (GlcNAc...) asparagine glycosylation is found at Asn148 and Asn151.

Belongs to the NGF-beta family. Homodimer; non-covalently linked. As to expression, expressed by the venom gland.

The protein localises to the secreted. Nerve growth factor is important for the development and maintenance of the sympathetic and sensory nervous systems. It stimulates division and differentiation of sympathetic and embryonic sensory neurons as well as basal forebrain cholinergic neurons in the brain. Its relevance in the snake venom is not clear. However, it has been shown to inhibit metalloproteinase-dependent proteolysis of platelet glycoprotein Ib alpha, suggesting a metalloproteinase inhibition to prevent metalloprotease autodigestion and/or protection against prey proteases. Binds a lipid between the two protein chains in the homodimer. The lipid-bound form promotes histamine relase from mouse mast cells, contrary to the lipid-free form. The protein is Venom nerve growth factor 1 of Tropidechis carinatus (Australian rough-scaled snake).